Reading from the N-terminus, the 930-residue chain is Translation initiation factor IF-2 (930 aa).

Low complexity predominate over residues 50 to 67 (FKPAAAPKVEAKPAAPKV). 2 disordered regions span residues 50–217 (FKPA…SSEE) and 260–346 (EVVP…HELP). Basic and acidic residues-rich tracts occupy residues 68-90 (SAEKKAEKSEPAKPAVAKEEAKP) and 110-125 (FKAEREARAKEQAERR). Low complexity predominate over residues 129–141 (KGNNRDQQQNGNR). 2 stretches are compositionally biased toward basic and acidic residues: residues 157–167 (RDNRRFNDQAK) and 262–295 (VPEKKEPAVDTRRKKQARPDKNRDDYDHEEDGPR). Positions 309 to 318 (NQKNSNWNNN) are enriched in low complexity. Residues 337–346 (VTERKFHELP) show a composition bias toward basic and acidic residues. A tr-type G domain is found at 432–599 (ERPPVVTIMG…TVLLVAEIQE (168 aa)). Residues 441–448 (GHVDHGKT) form a G1 region. A GTP-binding site is contributed by 441–448 (GHVDHGKT). The G2 stretch occupies residues 466–470 (GITQH). The segment at 487 to 490 (DTPG) is G3. Residues 487-491 (DTPGH) and 541-544 (NKID) each bind GTP. The G4 stretch occupies residues 541 to 544 (NKID). The interval 577–579 (SAK) is G5.

This sequence belongs to the TRAFAC class translation factor GTPase superfamily. Classic translation factor GTPase family. IF-2 subfamily.

The protein localises to the cytoplasm. In terms of biological role, one of the essential components for the initiation of protein synthesis. Protects formylmethionyl-tRNA from spontaneous hydrolysis and promotes its binding to the 30S ribosomal subunits. Also involved in the hydrolysis of GTP during the formation of the 70S ribosomal complex. This is Translation initiation factor IF-2 from Streptococcus pneumoniae (strain P1031).